Reading from the N-terminus, the 305-residue chain is Glycine--tRNA ligase alpha subunit (305 aa).

The protein belongs to the class-II aminoacyl-tRNA synthetase family. As to quaternary structure, tetramer of two alpha and two beta subunits.

It is found in the cytoplasm. The catalysed reaction is tRNA(Gly) + glycine + ATP = glycyl-tRNA(Gly) + AMP + diphosphate. The sequence is that of Glycine--tRNA ligase alpha subunit from Streptococcus pyogenes serotype M2 (strain MGAS10270).